The chain runs to 488 residues: 3-octaprenyl-4-hydroxybenzoate carboxy-lyase (488 aa).

Mn(2+) is bound at residue asparagine 172. Residues 175-177, 189-191, and 194-195 each bind prenylated FMN; these read IYR, RWL, and RG. Residue glutamate 238 coordinates Mn(2+). Aspartate 287 serves as the catalytic Proton donor.

Belongs to the UbiD family. Homohexamer. Requires prenylated FMN as cofactor. Mn(2+) serves as cofactor.

The protein resides in the cell membrane. It catalyses the reaction a 4-hydroxy-3-(all-trans-polyprenyl)benzoate + H(+) = a 2-(all-trans-polyprenyl)phenol + CO2. It functions in the pathway cofactor biosynthesis; ubiquinone biosynthesis. Functionally, catalyzes the decarboxylation of 3-octaprenyl-4-hydroxy benzoate to 2-octaprenylphenol, an intermediate step in ubiquinone biosynthesis. In Legionella pneumophila subsp. pneumophila (strain Philadelphia 1 / ATCC 33152 / DSM 7513), this protein is 3-octaprenyl-4-hydroxybenzoate carboxy-lyase.